Consider the following 602-residue polypeptide: Multidrug and toxin extrusion protein 2 (602 aa).

Residues 1 to 33 (MDSLQDTVALDHGGCCPALSRLVPRGFGTEMWT) are Cytoplasmic-facing. Residues 34–54 (LFALSGPLFLFQVLTFMIYIV) traverse the membrane as a helical segment. The Extracellular segment spans residues 55-66 (STVFCGHLGKVE). The helical transmembrane segment at 67–87 (LASVTLAVAFVNVCGVSVGVG) threads the bilayer. At 88-119 (LSSACDTLMSQSFGSPNKKHVGVILQRGALVL) the chain is on the cytoplasmic side. Residues 120 to 140 (LLCCLPCWALFLNTQHILLLF) traverse the membrane as a helical segment. Residues 141–153 (RQDPDVSRLTQDY) lie on the Extracellular side of the membrane. Residues 154-174 (VMIFIPGLPVIFLYNLLAKYL) form a helical membrane-spanning segment. The Cytoplasmic segment spans residues 175-219 (QNQGWLKGQEEESPFQTPGLSILHPSHSHLSRASFHLFQKITWPQ). Residues 220-240 (VLSGVVGNCVNGVANYALVSV) form a helical membrane-spanning segment. Over 241–248 (LNLGVRGS) the chain is Extracellular. A helical membrane pass occupies residues 249–269 (AYANIISQFAQTVFLLLYIVL). Residues 270–289 (KKLHLETWAGWSSQCLQDWG) lie on the Cytoplasmic side of the membrane. Residues 290–309 (PFFSLAVPSMLMICVEWWAY) form a helical membrane-spanning segment. Residues 310–327 (EIGSFLMGLLSVVDLSAQ) are Extracellular-facing. A helical transmembrane segment spans residues 328–348 (AVIYEVATVTYMIPLGLSIGV). Over 349-368 (CVRVGMALGAADTVQAKRSA) the chain is Cytoplasmic. The helical transmembrane segment at 369 to 389 (VSGVLSIVGISLVLGTLISIL) threads the bilayer. At 390–402 (KNQLGHIFTNDED) the chain is on the extracellular side. A helical transmembrane segment spans residues 403 to 423 (VIALVSQVLPVYSVFHVFEAI). The Cytoplasmic portion of the chain corresponds to 424 to 442 (CCVYGGVLRGTGKQAFGAA). A helical membrane pass occupies residues 443–463 (VNAITYYIIGLPLGILLTFVV). At 464–466 (RMR) the chain is on the extracellular side. The helical transmembrane segment at 467–487 (IMGLWLGMLACVFLATAAFVA) threads the bilayer. Over 488–578 (YTARLDWKLA…LSVKQLVIRR (91 aa)) the chain is Cytoplasmic. Positions 503-529 (KHSGRQQQQRAESTATRPGPEKAVLSS) are disordered. The segment covering 507 to 518 (RQQQQRAESTAT) has biased composition (polar residues). The helical transmembrane segment at 579-599 (GAALGAASATLMVGLTVRILA) threads the bilayer. The Extracellular segment spans residues 600-602 (TRH).

This sequence belongs to the multi antimicrobial extrusion (MATE) (TC 2.A.66.1) family. High expression in kidney. Very small expression in adrenal gland and lung. As to expression, high expression in kidney. Very small expression in brain and testis. In terms of tissue distribution, ubiquitously expressed in all tissues examined except the kidney.

It is found in the cell membrane. The protein resides in the apical cell membrane. The catalysed reaction is thiamine(out) + H(+)(in) = thiamine(in) + H(+)(out). It catalyses the reaction estrone 3-sulfate(in) + H(+)(out) = estrone 3-sulfate(out) + H(+)(in). The enzyme catalyses creatinine(in) + H(+)(out) = creatinine(out) + H(+)(in). Its function is as follows. Multidrug efflux pump that functions as a H(+)/organic cation antiporter. Mediates the efflux of cationic compounds, such as the model cations, tetraethylammonium (TEA) and 1-methyl-4-phenylpyridinium (MPP+), the platinum-based drug oxaliplatin or weak bases that are positively charged at physiological pH, cimetidine, the platinum-based drugs cisplatin and oxaliplatin or the antidiabetic drug metformin. Mediates the efflux of endogenous compounds such as, creatinine, thiamine and estrone-3-sulfate. Plays a physiological role in the excretion of drugs, toxins and endogenous metabolites through the kidney. In terms of biological role, non-functional protein. The protein is Multidrug and toxin extrusion protein 2 of Homo sapiens (Human).